We begin with the raw amino-acid sequence, 468 residues long: GDNF family receptor alpha-1 (468 aa).

The first 24 residues, M1–G24, serve as a signal peptide directing secretion. Tandem repeats lie at residues D25–N113, K150–R238, and E239–I342. C36 and C42 are oxidised to a cystine. N59 carries N-linked (GlcNAc...) asparagine glycosylation. 10 disulfides stabilise this stretch: C154–C214, C161–C167, C178–C192, C187–C233, C216–C221, C243–C313, C250–C256, C267–C285, C277–C337, and C315–C325. N-linked (GlcNAc...) asparagine glycans are attached at residues N347 and N406. S430 carries GPI-anchor amidated serine lipidation. Positions H431–S468 are cleaved as a propeptide — removed in mature form.

Belongs to the GDNFR family. In terms of assembly, interacts with GDNF ligand and RET: forms a 2:2:2 ternary complex composed of GDNF ligand, GFRA1 and RET receptor. Interacts with SORL1, either alone or in complex with GDNF. Interaction between SORL1 and GFRA1 leads to GFRA1 internalization, but not degradation. In terms of tissue distribution, expressed in the brain, in hippocampal neurons (at protein level). Isoform 1 and isoform 2 are expressed in heart, brain, lung, liver, kidney and testis.

The protein localises to the cell membrane. The protein resides in the golgi apparatus. It localises to the trans-Golgi network. It is found in the endosome. Its subcellular location is the multivesicular body. Coreceptor for GDNF, a neurotrophic factor that enhances survival and morphological differentiation of dopaminergic neurons and increases their high-affinity dopamine uptake. GDNF-binding leads to autophosphorylation and activation of the RET receptor. The chain is GDNF family receptor alpha-1 (Gfra1) from Mus musculus (Mouse).